We begin with the raw amino-acid sequence, 505 residues long: ATP synthase subunit beta (505 aa).

The tract at residues 1–25 (MAKAATPKETAAVKKPAAPKKAATA) is disordered. ATP is bound at residue 183–190 (GGAGVGKT).

This sequence belongs to the ATPase alpha/beta chains family. F-type ATPases have 2 components, CF(1) - the catalytic core - and CF(0) - the membrane proton channel. CF(1) has five subunits: alpha(3), beta(3), gamma(1), delta(1), epsilon(1). CF(0) has three main subunits: a(1), b(2) and c(9-12). The alpha and beta chains form an alternating ring which encloses part of the gamma chain. CF(1) is attached to CF(0) by a central stalk formed by the gamma and epsilon chains, while a peripheral stalk is formed by the delta and b chains.

The protein localises to the cell inner membrane. The catalysed reaction is ATP + H2O + 4 H(+)(in) = ADP + phosphate + 5 H(+)(out). Functionally, produces ATP from ADP in the presence of a proton gradient across the membrane. The catalytic sites are hosted primarily by the beta subunits. This is ATP synthase subunit beta from Sinorhizobium fredii (strain NBRC 101917 / NGR234).